Here is a 728-residue protein sequence, read N- to C-terminus: Histone demethylase JHD2 (728 aa).

One can recognise a JmjN domain in the interval 4 to 47 (IPALYPTEQEFKNPIDYLSNPHIKRLGVRYGMVKVVPPNGFCPP). The PHD-type zinc-finger motif lies at 235–285 (DDACIVCRKTNDPKRTILCDSCDKPFHIYCLSPPLERVPSGDWICNTCIVG). The 169-residue stretch at 381-549 (KYCDHPMNLT…YGFGAITDYK (169 aa)) folds into the JmjC domain. The Fe cation site is built by His-427, Asp-430, and His-517.

The protein belongs to the JARID1 histone demethylase family. Fe(2+) is required as a cofactor.

The protein resides in the nucleus. It carries out the reaction N(6),N(6),N(6)-trimethyl-L-lysyl(4)-[histone H3] + 3 2-oxoglutarate + 3 O2 = L-lysyl(4)-[histone H3] + 3 formaldehyde + 3 succinate + 3 CO2. Its function is as follows. Histone demethylase that demethylates 'Lys-4' of histone H3, thereby playing a central role in histone code. Demethylates trimethylated H3 'Lys-4'. The chain is Histone demethylase JHD2 (JHD2) from Saccharomyces cerevisiae (strain ATCC 204508 / S288c) (Baker's yeast).